Consider the following 340-residue polypeptide: Proline-rich transmembrane protein 2 (340 aa).

The disordered stretch occupies residues 1–261 (MAASSSEISE…AGPGVEGGEG (261 aa)). Residues 1–268 (MAASSSEISE…GEGTQKPRDY (268 aa)) lie on the Cytoplasmic side of the membrane. Ser28 bears the Phosphoserine mark. Thr74 bears the Phosphothreonine mark. Pro residues-rich tracts occupy residues 131–155 (PPEP…PKPA) and 197–207 (APEPHSPPSKK). The residue at position 238 (Ser238) is a Phosphoserine. The residue at position 240 (Arg240) is an Omega-N-methylarginine. Phosphoserine is present on residues Ser248 and Ser249. An intramembrane region (helical) is located at residues 269-289 (IILAILSCFCPMWPVNIVAFA). Residues 290–317 (YAVMSRNSLQQGDVDGAQRLGRVAKLLS) are Cytoplasmic-facing. The chain crosses the membrane as a helical span at residues 318 to 338 (IVALVGGVLIIIASCVINLGV). Over 339 to 340 (YK) the chain is Extracellular.

This sequence belongs to the CD225/Dispanin family. In terms of assembly, component of the outer core of AMPAR complex. AMPAR complex consists of an inner core made of 4 pore-forming GluA/GRIA proteins (GRIA1, GRIA2, GRIA3 and GRIA4) and 4 major auxiliary subunits arranged in a twofold symmetry. One of the two pairs of distinct binding sites is occupied either by CNIH2, CNIH3 or CACNG2, CACNG3. The other harbors CACNG2, CACNG3, CACNG4, CACNG8 or GSG1L. This inner core of AMPAR complex is complemented by outer core constituents binding directly to the GluA/GRIA proteins at sites distinct from the interaction sites of the inner core constituents. Outer core constituents include at least PRRT1, PRRT2, CKAMP44/SHISA9, FRRS1L and NRN1. The proteins of the inner and outer core serve as a platform for other, more peripherally associated AMPAR constituents. Alone or in combination, these auxiliary subunits control the gating and pharmacology of the AMPAR complex and profoundly impact their biogenesis and protein processing. Interacts with intersectin 1/ITSN1. Interacts with SNARE complex components, including SNAP25, STX1A, SYT1 and SYT2; this interaction may inhibit SNARE complex formation.

It localises to the cell membrane. Its subcellular location is the presynaptic cell membrane. The protein localises to the synapse. The protein resides in the cell projection. It is found in the axon. It localises to the cytoplasmic vesicle. Its subcellular location is the secretory vesicle. The protein localises to the synaptic vesicle membrane. The protein resides in the postsynaptic density membrane. It is found in the dendritic spine. In terms of biological role, as a component of the outer core of AMPAR complex, may be involved in synaptic transmission in the central nervous system. In hippocampal neurons, in presynaptic terminals, plays an important role in the final steps of neurotransmitter release, possibly by regulating Ca(2+)-sensing. In the cerebellum, may inhibit SNARE complex formation and down-regulate short-term facilitation. In Pongo abelii (Sumatran orangutan), this protein is Proline-rich transmembrane protein 2 (PRRT2).